A 526-amino-acid polypeptide reads, in one-letter code: Sugar transport protein 13 (526 aa).

The Cytoplasmic segment spans residues 1 to 18 (MTGGGFATSANGVEFEAK). A helical membrane pass occupies residues 19–39 (ITPIVIISCIMAATGGLMFGY). Over 40–81 (DVGVSGGVTSMPDFLEKFFPVVYRKVVAGADKDSNYCKYDNQ) the chain is Extracellular. The chain crosses the membrane as a helical span at residues 82-102 (GLQLFTSSLYLAGLTATFFAS). Over 103-111 (YTTRTLGRR) the chain is Cytoplasmic. The helical transmembrane segment at 112–132 (LTMLIAGVFFIIGVALNAGAQ) threads the bilayer. Topologically, residues 133–141 (DLAMLIAGR) are extracellular. A helical transmembrane segment spans residues 142 to 162 (ILLGCGVGFANQAVPLFLSEI). Over 163 to 168 (APTRIR) the chain is Cytoplasmic. A helical membrane pass occupies residues 169–189 (GGLNILFQLNVTIGILFANLV). The Extracellular segment spans residues 190-203 (NYGTAKIKGGWGWR). The helical transmembrane segment at 204-224 (LSLGLAGIPALLLTVGALLVT) threads the bilayer. Residues 225 to 296 (ETPNSLVERG…IAVALQIFQQ (72 aa)) are Cytoplasmic-facing. A helical membrane pass occupies residues 297 to 317 (CTGINAIMFYAPVLFSTLGFG). Residues 318-319 (SD) are Extracellular-facing. Residues 320–340 (ASLYSAVVTGAVNVLSTLVSI) form a helical membrane-spanning segment. The Cytoplasmic segment spans residues 341–349 (YSVDKVGRR). A helical transmembrane segment spans residues 350 to 370 (VLLLEAGVQMFFSQVVIAIIL). Over 371–383 (GVKVTDTSTNLSK) the chain is Extracellular. A helical membrane pass occupies residues 384 to 404 (GFAILVVVMICTYVAAFAWSW). At 405–426 (GPLGWLIPSETFPLETRSAGQS) the chain is on the cytoplasmic side. A helical transmembrane segment spans residues 427-447 (VTVCVNLLFTFIIAQAFLSML). Residues 448-451 (CHFK) lie on the Extracellular side of the membrane. A helical transmembrane segment spans residues 452–472 (FGIFIFFSAWVLIMSVFVMFL). Residues 473–526 (LPETKNIPIEEMTERVWKKHWFWARFMDDHNDHEFVNGEKSNGKSNGFDPSTRL) are Cytoplasmic-facing.

Belongs to the major facilitator superfamily. Sugar transporter (TC 2.A.1.1) family.

It localises to the cell membrane. Its function is as follows. Mediates an active uptake of hexoses, probably by sugar/hydrogen symport. The polypeptide is Sugar transport protein 13 (STP13) (Arabidopsis thaliana (Mouse-ear cress)).